We begin with the raw amino-acid sequence, 226 residues long: Transcriptional activator plp-1 (226 aa).

The protein belongs to the PUR DNA-binding protein family.

It localises to the nucleus. The protein resides in the chromosome. In terms of biological role, probable transcription activator. Binds telomeric DNA containing repeats of the sequence, 5'-TTAGGC-3'. Binds to end-1 promoter, activating end-1 expression, which is required for endoderm specification during embryonic development. The sequence is that of Transcriptional activator plp-1 from Caenorhabditis elegans.